Here is a 144-residue protein sequence, read N- to C-terminus: Putative sugar phosphate isomerase RC0402 (144 aa).

Residue His-12 coordinates substrate. The active-site Proton donor is His-101. Substrate is bound at residue Arg-135.

This sequence belongs to the LacAB/RpiB family.

The sequence is that of Putative sugar phosphate isomerase RC0402 from Rickettsia conorii (strain ATCC VR-613 / Malish 7).